Reading from the N-terminus, the 156-residue chain is Small ribosomal subunit protein uS7 (156 aa).

The protein belongs to the universal ribosomal protein uS7 family. As to quaternary structure, part of the 30S ribosomal subunit. Contacts proteins S9 and S11.

Functionally, one of the primary rRNA binding proteins, it binds directly to 16S rRNA where it nucleates assembly of the head domain of the 30S subunit. Is located at the subunit interface close to the decoding center, probably blocks exit of the E-site tRNA. This is Small ribosomal subunit protein uS7 from Bordetella bronchiseptica (strain ATCC BAA-588 / NCTC 13252 / RB50) (Alcaligenes bronchisepticus).